The chain runs to 420 residues: D-tagatose-1,6-bisphosphate aldolase subunit GatZ (420 aa).

This sequence belongs to the GatZ/KbaZ family. GatZ subfamily. Forms a complex with GatY.

The protein operates within carbohydrate metabolism; D-tagatose 6-phosphate degradation; D-glyceraldehyde 3-phosphate and glycerone phosphate from D-tagatose 6-phosphate: step 2/2. Its function is as follows. Component of the tagatose-1,6-bisphosphate aldolase GatYZ that is required for full activity and stability of the Y subunit. Could have a chaperone-like function for the proper and stable folding of GatY. When expressed alone, GatZ does not show any aldolase activity. Is involved in the catabolism of galactitol. This chain is D-tagatose-1,6-bisphosphate aldolase subunit GatZ, found in Escherichia coli O9:H4 (strain HS).